The following is a 668-amino-acid chain: Fructose-1,6-bisphosphatase class 3 (668 aa).

Belongs to the FBPase class 3 family. Mn(2+) is required as a cofactor.

The enzyme catalyses beta-D-fructose 1,6-bisphosphate + H2O = beta-D-fructose 6-phosphate + phosphate. It functions in the pathway carbohydrate biosynthesis; gluconeogenesis. In Clostridium botulinum (strain 657 / Type Ba4), this protein is Fructose-1,6-bisphosphatase class 3.